Consider the following 557-residue polypeptide: Dihydroxy-acid dehydratase (557 aa).

D78 contacts Mg(2+). Position 119 (C119) interacts with [2Fe-2S] cluster. Mg(2+) contacts are provided by D120 and K121. Position 121 is an N6-carboxylysine (K121). C192 lines the [2Fe-2S] cluster pocket. E446 is a binding site for Mg(2+). S472 serves as the catalytic Proton acceptor.

This sequence belongs to the IlvD/Edd family. In terms of assembly, homodimer. [2Fe-2S] cluster is required as a cofactor. Mg(2+) serves as cofactor.

It carries out the reaction (2R)-2,3-dihydroxy-3-methylbutanoate = 3-methyl-2-oxobutanoate + H2O. It catalyses the reaction (2R,3R)-2,3-dihydroxy-3-methylpentanoate = (S)-3-methyl-2-oxopentanoate + H2O. The protein operates within amino-acid biosynthesis; L-isoleucine biosynthesis; L-isoleucine from 2-oxobutanoate: step 3/4. Its pathway is amino-acid biosynthesis; L-valine biosynthesis; L-valine from pyruvate: step 3/4. Its function is as follows. Functions in the biosynthesis of branched-chain amino acids. Catalyzes the dehydration of (2R,3R)-2,3-dihydroxy-3-methylpentanoate (2,3-dihydroxy-3-methylvalerate) into 2-oxo-3-methylpentanoate (2-oxo-3-methylvalerate) and of (2R)-2,3-dihydroxy-3-methylbutanoate (2,3-dihydroxyisovalerate) into 2-oxo-3-methylbutanoate (2-oxoisovalerate), the penultimate precursor to L-isoleucine and L-valine, respectively. The protein is Dihydroxy-acid dehydratase of Campylobacter fetus subsp. fetus (strain 82-40).